The sequence spans 193 residues: Ion-translocating oxidoreductase complex subunit A (193 aa).

Helical transmembrane passes span Leu-5 to Leu-25, Ile-39 to Val-59, Leu-67 to Phe-87, Leu-102 to Leu-122, Ile-134 to Met-154, and Ser-171 to Val-191.

The protein belongs to the NqrDE/RnfAE family. In terms of assembly, the complex is composed of six subunits: RnfA, RnfB, RnfC, RnfD, RnfE and RnfG.

The protein localises to the cell inner membrane. Functionally, part of a membrane-bound complex that couples electron transfer with translocation of ions across the membrane. The sequence is that of Ion-translocating oxidoreductase complex subunit A from Vibrio cholerae serotype O1 (strain ATCC 39315 / El Tor Inaba N16961).